A 204-amino-acid chain; its full sequence is MTKYTFKPKDFKAFNVEGLDARMEALNEYIRPQLHELGEYFSDFFTSQTGETFYPHVAKHARRSVNPPKDTWVAFATNKRGYKMLPHFQIGMFEDQLFVMFGIMHEAKDKATRAKVFERKFKAIQQLPDDYRVCLDHMKPDKPFIKDLTDDDLKEAIQRAINVKKGEFFIARAITPQDKRLKSDKAFIAFLEETFDQFLPFYSA.

It belongs to the UPF0637 family.

This Staphylococcus aureus (strain bovine RF122 / ET3-1) protein is UPF0637 protein SAB0972c.